We begin with the raw amino-acid sequence, 265 residues long: Hydroxyethylthiazole kinase (265 aa).

A substrate-binding site is contributed by methionine 36. Residues lysine 112 and serine 160 each coordinate ATP. Glycine 187 lines the substrate pocket.

It belongs to the Thz kinase family. Mg(2+) serves as cofactor.

The enzyme catalyses 5-(2-hydroxyethyl)-4-methylthiazole + ATP = 4-methyl-5-(2-phosphooxyethyl)-thiazole + ADP + H(+). It participates in cofactor biosynthesis; thiamine diphosphate biosynthesis; 4-methyl-5-(2-phosphoethyl)-thiazole from 5-(2-hydroxyethyl)-4-methylthiazole: step 1/1. Functionally, catalyzes the phosphorylation of the hydroxyl group of 4-methyl-5-beta-hydroxyethylthiazole (THZ). The chain is Hydroxyethylthiazole kinase from Clostridium perfringens (strain SM101 / Type A).